An 86-amino-acid chain; its full sequence is Defensin-like protein a (86 aa).

The N-terminal stretch at 1–23 (MRCSVLFVVSYVIMSLLISHVQG) is a signal peptide. 4 cysteine pairs are disulfide-bonded: Cys-33/Cys-81, Cys-43/Cys-67, Cys-51/Cys-76, and Cys-65/Cys-78.

It belongs to the DEFL family. Expressed specifically in anthers.

It is found in the secreted. In terms of biological role, involved in self-incompatibility. The sequence is that of Defensin-like protein a (SCRa) from Arabidopsis lyrata (Lyre-leaved rock-cress).